The primary structure comprises 427 residues: 3-phosphoshikimate 1-carboxyvinyltransferase (427 aa).

3 residues coordinate 3-phosphoshikimate: Lys22, Ser23, and Arg27. Lys22 lines the phosphoenolpyruvate pocket. Phosphoenolpyruvate-binding residues include Gly96 and Arg124. 3-phosphoshikimate contacts are provided by Ser169, Ser170, Gln171, Ser197, Asp313, Asn336, and Lys340. Gln171 is a phosphoenolpyruvate binding site. Asp313 (proton acceptor) is an active-site residue. The phosphoenolpyruvate site is built by Arg344, Arg386, and Lys411.

This sequence belongs to the EPSP synthase family. As to quaternary structure, monomer.

The protein localises to the cytoplasm. It carries out the reaction 3-phosphoshikimate + phosphoenolpyruvate = 5-O-(1-carboxyvinyl)-3-phosphoshikimate + phosphate. It participates in metabolic intermediate biosynthesis; chorismate biosynthesis; chorismate from D-erythrose 4-phosphate and phosphoenolpyruvate: step 6/7. Its function is as follows. Catalyzes the transfer of the enolpyruvyl moiety of phosphoenolpyruvate (PEP) to the 5-hydroxyl of shikimate-3-phosphate (S3P) to produce enolpyruvyl shikimate-3-phosphate and inorganic phosphate. The protein is 3-phosphoshikimate 1-carboxyvinyltransferase of Escherichia coli O9:H4 (strain HS).